A 239-amino-acid chain; its full sequence is Large ribosomal subunit protein uL2 (239 aa).

The interval 202 to 239 (HGGGSHQHVGRPSTVARNTPPGRKVGHIAARRTGRRKG) is disordered. Residues 225–239 (KVGHIAARRTGRRKG) show a composition bias toward basic residues.

Belongs to the universal ribosomal protein uL2 family. As to quaternary structure, part of the 50S ribosomal subunit. Forms a bridge to the 30S subunit in the 70S ribosome.

In terms of biological role, one of the primary rRNA binding proteins. Required for association of the 30S and 50S subunits to form the 70S ribosome, for tRNA binding and peptide bond formation. It has been suggested to have peptidyltransferase activity; this is somewhat controversial. Makes several contacts with the 16S rRNA in the 70S ribosome. The protein is Large ribosomal subunit protein uL2 of Desulfurococcus amylolyticus (strain DSM 18924 / JCM 16383 / VKM B-2413 / 1221n) (Desulfurococcus kamchatkensis).